Here is a 416-residue protein sequence, read N- to C-terminus: MDLITLGKAAKDAAFQLATASTAQKNKALAIIADELEANAADILAANSKDIELGRQAGLSEAMLDRLLLNESRLNGIANDVRNVISLTDPVGSEIDSKVLENGMQLSRRRVPLGVVGVIYEARPNVTIDIAALCLKTGNASILRGGKETFFSNMELVKVIQSALAKAGLPAASVQYIEKPDRELVTQLLKLDDYVDMIIPRGGAGLHKMCKENSTIPVIIGGFGISHIFVDETADLAKSVDVVENAKAQRPSACNALDTLLVHERIAEQFLPMLVAKLNGKVTFVVEPKAKAYMTKAEQVRDASDGDFDTEWLSYTLGVKVVADVQEAIDHMREHNASHSDAIMTNHLQNAELFINSAGSAAVYVNASTRFTDGAQFGLGAEVAVSTQKLHARGPMGLEELTSYKWVGKANYLSRA.

The protein belongs to the gamma-glutamyl phosphate reductase family.

It is found in the cytoplasm. It catalyses the reaction L-glutamate 5-semialdehyde + phosphate + NADP(+) = L-glutamyl 5-phosphate + NADPH + H(+). The protein operates within amino-acid biosynthesis; L-proline biosynthesis; L-glutamate 5-semialdehyde from L-glutamate: step 2/2. Its function is as follows. Catalyzes the NADPH-dependent reduction of L-glutamate 5-phosphate into L-glutamate 5-semialdehyde and phosphate. The product spontaneously undergoes cyclization to form 1-pyrroline-5-carboxylate. The protein is Gamma-glutamyl phosphate reductase of Vibrio vulnificus (strain CMCP6).